A 379-amino-acid polypeptide reads, in one-letter code: Eukaryotic translation initiation factor 3 subunit H (379 aa).

The region spanning 17-170 (VQIDSLVVMK…IRAYRLSTKA (154 aa)) is the MPN domain. The segment covering 280–291 (RQAENEQREARG) has biased composition (basic and acidic residues). Residues 280-300 (RQAENEQREARGEPPLSFDDI) are disordered.

Belongs to the eIF-3 subunit H family. Component of the eukaryotic translation initiation factor 3 (eIF-3) complex.

The protein resides in the cytoplasm. Component of the eukaryotic translation initiation factor 3 (eIF-3) complex, which is involved in protein synthesis of a specialized repertoire of mRNAs and, together with other initiation factors, stimulates binding of mRNA and methionyl-tRNAi to the 40S ribosome. The eIF-3 complex specifically targets and initiates translation of a subset of mRNAs involved in cell proliferation. This chain is Eukaryotic translation initiation factor 3 subunit H, found in Brugia malayi (Filarial nematode worm).